Here is a 293-residue protein sequence, read N- to C-terminus: Pyridoxal 5'-phosphate synthase subunit PdxS (293 aa).

Asp23 provides a ligand contact to D-ribose 5-phosphate. Lys80 (schiff-base intermediate with D-ribose 5-phosphate) is an active-site residue. Gly152 provides a ligand contact to D-ribose 5-phosphate. D-glyceraldehyde 3-phosphate is bound at residue Arg164. D-ribose 5-phosphate contacts are provided by residues Gly213 and 234 to 235; that span reads GS.

This sequence belongs to the PdxS/SNZ family. In terms of assembly, in the presence of PdxT, forms a dodecamer of heterodimers.

The enzyme catalyses aldehydo-D-ribose 5-phosphate + D-glyceraldehyde 3-phosphate + L-glutamine = pyridoxal 5'-phosphate + L-glutamate + phosphate + 3 H2O + H(+). Its pathway is cofactor biosynthesis; pyridoxal 5'-phosphate biosynthesis. In terms of biological role, catalyzes the formation of pyridoxal 5'-phosphate from ribose 5-phosphate (RBP), glyceraldehyde 3-phosphate (G3P) and ammonia. The ammonia is provided by the PdxT subunit. Can also use ribulose 5-phosphate and dihydroxyacetone phosphate as substrates, resulting from enzyme-catalyzed isomerization of RBP and G3P, respectively. This chain is Pyridoxal 5'-phosphate synthase subunit PdxS, found in Roseiflexus castenholzii (strain DSM 13941 / HLO8).